Here is a 1201-residue protein sequence, read N- to C-terminus: DNA-directed RNA polymerase subunit beta' (1201 aa).

Residues Cys-60, Cys-62, Cys-75, and Cys-78 each contribute to the Zn(2+) site. Mg(2+)-binding residues include Asp-449, Asp-451, and Asp-453. Residues Cys-818, Cys-892, Cys-899, and Cys-902 each coordinate Zn(2+).

Belongs to the RNA polymerase beta' chain family. In terms of assembly, the RNAP catalytic core consists of 2 alpha, 1 beta, 1 beta' and 1 omega subunit. When a sigma factor is associated with the core the holoenzyme is formed, which can initiate transcription. Mg(2+) is required as a cofactor. The cofactor is Zn(2+).

It catalyses the reaction RNA(n) + a ribonucleoside 5'-triphosphate = RNA(n+1) + diphosphate. In terms of biological role, DNA-dependent RNA polymerase catalyzes the transcription of DNA into RNA using the four ribonucleoside triphosphates as substrates. The protein is DNA-directed RNA polymerase subunit beta' of Listeria monocytogenes serovar 1/2a (strain ATCC BAA-679 / EGD-e).